Consider the following 209-residue polypeptide: Uracil phosphoribosyltransferase (209 aa).

Residues R79, R104, and 131–139 (DPMLATGNS) each bind 5-phospho-alpha-D-ribose 1-diphosphate. Uracil is bound by residues I194 and 199–201 (GDA). D200 contacts 5-phospho-alpha-D-ribose 1-diphosphate.

This sequence belongs to the UPRTase family. Mg(2+) serves as cofactor.

The catalysed reaction is UMP + diphosphate = 5-phospho-alpha-D-ribose 1-diphosphate + uracil. It participates in pyrimidine metabolism; UMP biosynthesis via salvage pathway; UMP from uracil: step 1/1. With respect to regulation, allosterically activated by GTP. In terms of biological role, catalyzes the conversion of uracil and 5-phospho-alpha-D-ribose 1-diphosphate (PRPP) to UMP and diphosphate. This Variovorax paradoxus (strain S110) protein is Uracil phosphoribosyltransferase.